The primary structure comprises 386 residues: Succinate--CoA ligase [ADP-forming] subunit beta (386 aa).

The ATP-grasp domain maps to 9 to 244 (KELLKQFGVT…LDEEDPAEIE (236 aa)). ATP is bound by residues Lys-46, 53 to 55 (GRG), Glu-99, Ala-102, and Glu-107. Mg(2+) contacts are provided by Asn-199 and Asp-213. Residues Asn-264 and 321–323 (GIM) contribute to the substrate site.

Belongs to the succinate/malate CoA ligase beta subunit family. Heterotetramer of two alpha and two beta subunits. Mg(2+) is required as a cofactor.

It catalyses the reaction succinate + ATP + CoA = succinyl-CoA + ADP + phosphate. It carries out the reaction GTP + succinate + CoA = succinyl-CoA + GDP + phosphate. The protein operates within carbohydrate metabolism; tricarboxylic acid cycle; succinate from succinyl-CoA (ligase route): step 1/1. Functionally, succinyl-CoA synthetase functions in the citric acid cycle (TCA), coupling the hydrolysis of succinyl-CoA to the synthesis of either ATP or GTP and thus represents the only step of substrate-level phosphorylation in the TCA. The beta subunit provides nucleotide specificity of the enzyme and binds the substrate succinate, while the binding sites for coenzyme A and phosphate are found in the alpha subunit. The polypeptide is Succinate--CoA ligase [ADP-forming] subunit beta (Bordetella pertussis (strain Tohama I / ATCC BAA-589 / NCTC 13251)).